Reading from the N-terminus, the 207-residue chain is ATP-dependent Clp protease proteolytic subunit (207 aa).

Ser111 serves as the catalytic Nucleophile. His136 is a catalytic residue.

This sequence belongs to the peptidase S14 family. As to quaternary structure, fourteen ClpP subunits assemble into 2 heptameric rings which stack back to back to give a disk-like structure with a central cavity, resembling the structure of eukaryotic proteasomes.

The protein resides in the cytoplasm. It catalyses the reaction Hydrolysis of proteins to small peptides in the presence of ATP and magnesium. alpha-casein is the usual test substrate. In the absence of ATP, only oligopeptides shorter than five residues are hydrolyzed (such as succinyl-Leu-Tyr-|-NHMec, and Leu-Tyr-Leu-|-Tyr-Trp, in which cleavage of the -Tyr-|-Leu- and -Tyr-|-Trp bonds also occurs).. In terms of biological role, cleaves peptides in various proteins in a process that requires ATP hydrolysis. Has a chymotrypsin-like activity. Plays a major role in the degradation of misfolded proteins. This is ATP-dependent Clp protease proteolytic subunit from Proteus mirabilis (strain HI4320).